A 361-amino-acid polypeptide reads, in one-letter code: Microtubule-associated protein Jupiter (361 aa).

A compositionally biased stretch (polar residues) spans 1–15; sequence MISNYDITDSKSSSK. Disordered regions lie at residues 1-38 and 70-99; these read MISNYDITDSKSSSKVLRPPGGGSSDIFGSDMPQTPRN and IGDNPRRGQKPVDSHSRLFGEPMRPITPGK. S24 bears the Phosphoserine mark. T35 is modified (phosphothreonine). Over residues 73–87 the composition is skewed to basic and acidic residues; sequence NPRRGQKPVDSHSRL. A Phosphothreonine modification is found at T96. Position 105 is a phosphoserine (S105). 2 stretches are compositionally biased toward low complexity: residues 125-134 and 141-154; these read GSSTANTTNG and SGSVSSASSSVSSS. Disordered regions lie at residues 125-165 and 328-361; these read GSST…SGSR and GSTNSGSVGNGDNGGNSVVNKNRVPPGGYSSGLW. Phosphoserine is present on residues S143 and S154. A compositionally biased stretch (polar residues) spans 155-165; sequence TENLKMNSGSR.

Belongs to the MAP Jupiter family.

The protein resides in the nucleus. The protein localises to the cytoplasm. It localises to the cytoskeleton. It is found in the spindle. In terms of biological role, binds to all microtubule populations. The sequence is that of Microtubule-associated protein Jupiter from Drosophila persimilis (Fruit fly).